A 206-amino-acid polypeptide reads, in one-letter code: MDLTITTLEGKDAGKVKLNEEIFGLDPRDDILQRVVRWQLARRQQGSHKAQGRGDVSRTGSKMYKQKGTGRARHHSARAPQFRGGGQAHGPVVRNHDHDLPKKVRALGLRHALSAKAKASDLIIIDDLASADAKTKQLVSQFAKLGLENALLIGGAEIDANFQRAASNIPNIDVLPVQGINVYDILRRGKLVLSKAAVEALEERFK.

The disordered stretch occupies residues 42–94; it reads RRQQGSHKAQGRGDVSRTGSKMYKQKGTGRARHHSARAPQFRGGGQAHGPVVR. Residues 64 to 77 are compositionally biased toward basic residues; it reads YKQKGTGRARHHSA.

The protein belongs to the universal ribosomal protein uL4 family. In terms of assembly, part of the 50S ribosomal subunit.

In terms of biological role, one of the primary rRNA binding proteins, this protein initially binds near the 5'-end of the 23S rRNA. It is important during the early stages of 50S assembly. It makes multiple contacts with different domains of the 23S rRNA in the assembled 50S subunit and ribosome. Forms part of the polypeptide exit tunnel. The sequence is that of Large ribosomal subunit protein uL4 from Brucella abortus biovar 1 (strain 9-941).